The following is a 412-amino-acid chain: Transforming growth factor beta-3 proprotein (412 aa).

A signal peptide spans 1 to 23; sequence MKMHLQRALVVLALLNFATVSLS. Residues Asn74, Asn135, and Asn142 are each glycosylated (N-linked (GlcNAc...) asparagine). Positions 261-263 match the Cell attachment site motif; the sequence is RGD. At Gln293 the chain carries N5-methylglutamine. Disulfide bonds link Cys307-Cys316, Cys315-Cys378, Cys344-Cys409, and Cys348-Cys411.

It belongs to the TGF-beta family. Interacts with ASPN. Latency-associated peptide: Homodimer; disulfide-linked. Latency-associated peptide: Interacts with Transforming growth factor beta-3 (TGF-beta-3) chain; interaction is non-covalent and maintains (TGF-beta-3) in a latent state. Latency-associated peptide: Interacts with LRRC32/GARP; leading to regulate activation of TGF-beta-3 and promote epithelial fusion during palate development. Latency-associated peptide: Interacts (via cell attachment site) with integrins, leading to release of the active TGF-beta-3. Transforming growth factor beta-3: Homodimer; disulfide-linked. Transforming growth factor beta-3: Interacts with TGF-beta receptors (TGFBR1 and TGFBR2), leading to signal transduction. In terms of processing, transforming growth factor beta-3 proprotein: The precursor proprotein is cleaved in the Golgi apparatus to form Transforming growth factor beta-3 (TGF-beta-3) and Latency-associated peptide (LAP) chains, which remain non-covalently linked, rendering TGF-beta-3 inactive. Post-translationally, methylated at Gln-293 by N6AMT1.

The protein resides in the secreted. It is found in the extracellular space. The protein localises to the extracellular matrix. Functionally, transforming growth factor beta-3 proprotein: Precursor of the Latency-associated peptide (LAP) and Transforming growth factor beta-3 (TGF-beta-3) chains, which constitute the regulatory and active subunit of TGF-beta-3, respectively. Required to maintain the Transforming growth factor beta-3 (TGF-beta-3) chain in a latent state during storage in extracellular matrix. Associates non-covalently with TGF-beta-3 and regulates its activation via interaction with 'milieu molecules', such as LTBP1 and LRRC32/GARP, that control activation of TGF-beta-3. Interaction with integrins results in distortion of the Latency-associated peptide chain and subsequent release of the active TGF-beta-3. Its function is as follows. Transforming growth factor beta-3: Multifunctional protein that regulates embryogenesis and cell differentiation and is required in various processes such as secondary palate development. Activation into mature form follows different steps: following cleavage of the proprotein in the Golgi apparatus, Latency-associated peptide (LAP) and Transforming growth factor beta-3 (TGF-beta-3) chains remain non-covalently linked rendering TGF-beta-3 inactive during storage in extracellular matrix. At the same time, LAP chain interacts with 'milieu molecules', such as LTBP1 and LRRC32/GARP that control activation of TGF-beta-3 and maintain it in a latent state during storage in extracellular milieus. TGF-beta-3 is released from LAP by integrins: integrin-binding results in distortion of the LAP chain and subsequent release of the active TGF-beta-3. Once activated following release of LAP, TGF-beta-3 acts by binding to TGF-beta receptors (TGFBR1 and TGFBR2), which transduce signal. The polypeptide is Transforming growth factor beta-3 proprotein (TGFB3) (Homo sapiens (Human)).